Consider the following 291-residue polypeptide: Ribosomal RNA small subunit methyltransferase H (291 aa).

Residues glycine 36–histidine 38, aspartate 55, leucine 88, aspartate 102, and glutamine 109 each bind S-adenosyl-L-methionine. The interval lysine 268–isoleucine 291 is disordered.

Belongs to the methyltransferase superfamily. RsmH family.

It is found in the cytoplasm. It carries out the reaction cytidine(1402) in 16S rRNA + S-adenosyl-L-methionine = N(4)-methylcytidine(1402) in 16S rRNA + S-adenosyl-L-homocysteine + H(+). Its function is as follows. Specifically methylates the N4 position of cytidine in position 1402 (C1402) of 16S rRNA. This chain is Ribosomal RNA small subunit methyltransferase H, found in Thermosipho melanesiensis (strain DSM 12029 / CIP 104789 / BI429).